The following is a 406-amino-acid chain: CinA-like protein (406 aa).

It belongs to the CinA family.

The chain is CinA-like protein from Thermomicrobium roseum (strain ATCC 27502 / DSM 5159 / P-2).